The sequence spans 448 residues: Adenylosuccinate synthetase (448 aa).

GTP contacts are provided by residues 22-28 (GDEGKGK) and 50-52 (GHT). D23 (proton acceptor) is an active-site residue. Mg(2+)-binding residues include D23 and G50. IMP-binding positions include 23–26 (DEGK), 48–51 (NAGH), T139, R153, Q234, T249, and R321. The active-site Proton donor is the H51. Substrate is bound at residue 317-323 (SVTGRPR). GTP-binding positions include R323, 349–351 (KLD), and 431–433 (STG).

The protein belongs to the adenylosuccinate synthetase family. Homodimer. Requires Mg(2+) as cofactor.

It localises to the cytoplasm. The catalysed reaction is IMP + L-aspartate + GTP = N(6)-(1,2-dicarboxyethyl)-AMP + GDP + phosphate + 2 H(+). Its pathway is purine metabolism; AMP biosynthesis via de novo pathway; AMP from IMP: step 1/2. In terms of biological role, plays an important role in the de novo pathway of purine nucleotide biosynthesis. Catalyzes the first committed step in the biosynthesis of AMP from IMP. The sequence is that of Adenylosuccinate synthetase from Burkholderia mallei (strain NCTC 10247).